The chain runs to 1209 residues: Protein FAM83H (1209 aa).

The interval 1-286 is DUF1669; it reads MARRSQSSSQ…LFAQSEPLVP (286 aa). Residues 1–286 are mediates interaction with CSNK1A1 and is required for FAM83H activity in keratin cytoskeleton organization; that stretch reads MARRSQSSSQ…LFAQSEPLVP (286 aa). 6 positions are modified to phosphoserine: Ser512, Ser513, Ser515, Ser522, Ser639, and Ser660. Disordered stretches follow at residues 512–545, 615–664, and 735–760; these read SSASREVRHGSDPAFGPSPRGLEPSGASRPNLGQ, RDLL…FRSR, and KGPARDPGGAGGAVTSSSHSKAVVSQ. A Phosphothreonine modification is found at Thr749. Residues Ser752, Ser778, Ser806, and Ser871 each carry the phosphoserine modification. The disordered stretch occupies residues 829-1056; the sequence is AQGRSLSPQG…EERGSRVRLA (228 aa). At Thr873 the chain carries Phosphothreonine. Phosphoserine occurs at positions 882, 893, 904, and 915. Residues 915–942 are compositionally biased toward polar residues; sequence SPTSGFPNRRGSPTTGLMEQKGSPTSTY. A Phosphothreonine modification is found at Thr917. At Ser926 the chain carries Phosphoserine. The residue at position 928 (Thr928) is a Phosphothreonine. Residues Ser937, Ser948, Ser959, Ser970, Ser977, Ser1035, Ser1041, and Ser1057 each carry the phosphoserine modification. Thr1072 is modified (phosphothreonine). 2 disordered regions span residues 1076-1147 and 1174-1193; these read LEQI…EERD and EAGSSGAGDNLADEDTRDSK. 3 positions are modified to phosphoserine: Ser1080, Ser1098, and Ser1177.

This sequence belongs to the FAM83 family. In terms of assembly, directly interacts (via DUF1669) with casein kinase isoforms CSNK1A1, CSNK1A1L, CSNK1D and CSNK1E. Interaction with CSNK1A1 recruits CSNK1A1 to keratin filaments. Interacts with KRT18 and probably other keratins. As to expression, expressed in tooth follicle, eye, liver and kidney.

It is found in the cytoplasm. The protein resides in the cytoskeleton. May play a major role in the structural organization and calcification of developing enamel. May play a role in keratin cytoskeleton disassembly by recruiting CSNK1A1 to keratin filaments. Thereby, it may regulate epithelial cell migration. This is Protein FAM83H from Mus musculus (Mouse).